The primary structure comprises 236 residues: Movement and silencing protein TGBp1 (236 aa).

A (+)RNA virus helicase ATP-binding domain is found at 1–117 (MDSEIVERLT…EPTARAHYTC (117 aa)). One can recognise a (+)RNA virus helicase C-terminal domain in the interval 118-236 (NRTHRLGQLT…LYTAHFAPSA (119 aa)).

The protein belongs to the Tymovirales TGBp1 protein family. As to quaternary structure, homodimer and homooligomer. Interacts with capsid protein. Interacts with host AGO1; this interaction targets the host protein for degradation, thereby suppressing the antiviral RNA silencing.

The protein resides in the host cytoplasm. Its function is as follows. Transports viral genome to neighboring plant cells directly through plasmosdesmata, without any budding. The movement protein allows efficient cell to cell propagation, by bypassing the host cell wall barrier. Increases plasmodesma size exclusion limit. Acts as a suppressor of RNA-mediated gene silencing, also known as post-transcriptional gene silencing (PTGS), a mechanism of plant viral defense that limits the accumulation of viral RNAs. This Setaria italica (Foxtail millet) protein is Movement and silencing protein TGBp1.